The following is an 86-amino-acid chain: Neurotoxin-like protein pMD18-NTL3 (86 aa).

An N-terminal signal peptide occupies residues 1–21 (MKTLLLTLVVLTIACLDLGYT). Cystine bridges form between Cys-24/Cys-45, Cys-38/Cys-62, Cys-66/Cys-78, and Cys-79/Cys-84.

It belongs to the three-finger toxin family. Short-chain subfamily. Orphan group IX sub-subfamily. As to expression, expressed by the venom gland.

The protein resides in the secreted. In Bungarus multicinctus (Many-banded krait), this protein is Neurotoxin-like protein pMD18-NTL3.